The primary structure comprises 273 residues: tRNA pseudouridine synthase B (273 aa).

Residue Asp-38 is the Nucleophile of the active site.

The protein belongs to the pseudouridine synthase TruB family. Type 1 subfamily.

The catalysed reaction is uridine(55) in tRNA = pseudouridine(55) in tRNA. Functionally, responsible for synthesis of pseudouridine from uracil-55 in the psi GC loop of transfer RNAs. In Campylobacter curvus (strain 525.92), this protein is tRNA pseudouridine synthase B.